Reading from the N-terminus, the 94-residue chain is Acylphosphatase (94 aa).

The region spanning 8-94 (ALHVIVKGRV…RGYTDFRIEV (87 aa)) is the Acylphosphatase-like domain. Catalysis depends on residues Arg-23 and Asn-41.

Belongs to the acylphosphatase family.

The catalysed reaction is an acyl phosphate + H2O = a carboxylate + phosphate + H(+). In Treponema denticola (strain ATCC 35405 / DSM 14222 / CIP 103919 / JCM 8153 / KCTC 15104), this protein is Acylphosphatase (acyP).